The primary structure comprises 265 residues: tRNA (guanine-N(1)-)-methyltransferase (265 aa).

S-adenosyl-L-methionine-binding positions include Gly-119 and 139–144; that span reads VGDYIL.

It belongs to the RNA methyltransferase TrmD family. In terms of assembly, homodimer.

It localises to the cytoplasm. It catalyses the reaction guanosine(37) in tRNA + S-adenosyl-L-methionine = N(1)-methylguanosine(37) in tRNA + S-adenosyl-L-homocysteine + H(+). Functionally, specifically methylates guanosine-37 in various tRNAs. This Pseudoalteromonas atlantica (strain T6c / ATCC BAA-1087) protein is tRNA (guanine-N(1)-)-methyltransferase.